Reading from the N-terminus, the 369-residue chain is tRNA 2-selenouridine synthase (369 aa).

Residues 12–136 (FLEDTPLMDV…LRNFLFETTR (125 aa)) enclose the Rhodanese domain. The active-site S-selanylcysteine intermediate is the Cys95.

This sequence belongs to the SelU family. Monomer.

The catalysed reaction is 5-methylaminomethyl-2-thiouridine(34) in tRNA + selenophosphate + (2E)-geranyl diphosphate + H2O + H(+) = 5-methylaminomethyl-2-selenouridine(34) in tRNA + (2E)-thiogeraniol + phosphate + diphosphate. It carries out the reaction 5-methylaminomethyl-2-thiouridine(34) in tRNA + (2E)-geranyl diphosphate = 5-methylaminomethyl-S-(2E)-geranyl-thiouridine(34) in tRNA + diphosphate. The enzyme catalyses 5-methylaminomethyl-S-(2E)-geranyl-thiouridine(34) in tRNA + selenophosphate + H(+) = 5-methylaminomethyl-2-(Se-phospho)selenouridine(34) in tRNA + (2E)-thiogeraniol. It catalyses the reaction 5-methylaminomethyl-2-(Se-phospho)selenouridine(34) in tRNA + H2O = 5-methylaminomethyl-2-selenouridine(34) in tRNA + phosphate. Its function is as follows. Involved in the post-transcriptional modification of the uridine at the wobble position (U34) of tRNA(Lys), tRNA(Glu) and tRNA(Gln). Catalyzes the conversion of 2-thiouridine (S2U-RNA) to 2-selenouridine (Se2U-RNA). Acts in a two-step process involving geranylation of 2-thiouridine (S2U) to S-geranyl-2-thiouridine (geS2U) and subsequent selenation of the latter derivative to 2-selenouridine (Se2U) in the tRNA chain. The protein is tRNA 2-selenouridine synthase of Pseudomonas paraeruginosa (strain DSM 24068 / PA7) (Pseudomonas aeruginosa (strain PA7)).